The chain runs to 187 residues: GTP cyclohydrolase 1 (187 aa).

Zn(2+)-binding residues include Cys76, His79, and Cys148.

It belongs to the GTP cyclohydrolase I family. Toroid-shaped homodecamer, composed of two pentamers of five dimers.

The enzyme catalyses GTP + H2O = 7,8-dihydroneopterin 3'-triphosphate + formate + H(+). The protein operates within cofactor biosynthesis; 7,8-dihydroneopterin triphosphate biosynthesis; 7,8-dihydroneopterin triphosphate from GTP: step 1/1. The sequence is that of GTP cyclohydrolase 1 from Streptococcus thermophilus (strain CNRZ 1066).